A 108-amino-acid polypeptide reads, in one-letter code: Synaptic plasticity regulator PANTS (108 aa).

The disordered stretch occupies residues 58 to 108 (KNHSTQAKDSLQESERKRLADQRKFTPVWELRQKPPSDWHLPLNQGEPQDP). The span at 67–81 (SLQESERKRLADQRK) shows a compositional bias: basic and acidic residues.

Belongs to the UPF0545 family. Post-translationally, rapidly degraded by proteolysis following neuronal stimulation, resulting in increased AMPA receptor clustering.

The protein localises to the synapse. It localises to the synaptic cleft. In terms of biological role, negatively regulates long-term potentiation and modulates adult synaptic plasticity. This is Synaptic plasticity regulator PANTS from Danio rerio (Zebrafish).